Reading from the N-terminus, the 82-residue chain is U-scoloptoxin(21)-Sm3a (82 aa).

The signal sequence occupies residues 1–21 (MKIIALLLMVFLDFIIVNXAE).

This sequence belongs to the scoloptoxin-21 family. In terms of tissue distribution, expressed by the venom gland.

It is found in the secreted. The chain is U-scoloptoxin(21)-Sm3a from Scolopendra morsitans (Tanzanian blue ringleg centipede).